We begin with the raw amino-acid sequence, 587 residues long: Proteasome-associated ATPase (587 aa).

Positions 1–94 (MAARDDAEAR…KEEVDRLAQP (94 aa)) form a coiled coil. 276 to 281 (GCGKTL) lines the ATP pocket. Residues 586–587 (YL) form a docks into pockets in the proteasome alpha-ring region.

This sequence belongs to the AAA ATPase family. Homohexamer. Assembles into a hexameric ring structure that caps the 20S proteasome core. Strongly interacts with the prokaryotic ubiquitin-like protein Pup through a hydrophobic interface; the interacting region of ARC lies in its N-terminal coiled-coil domain. There is one Pup binding site per ARC hexamer ring. Upon ATP-binding, the C-terminus of ARC interacts with the alpha-rings of the proteasome core, possibly by binding to the intersubunit pockets.

It functions in the pathway protein degradation; proteasomal Pup-dependent pathway. Functionally, ATPase which is responsible for recognizing, binding, unfolding and translocation of pupylated proteins into the bacterial 20S proteasome core particle. May be essential for opening the gate of the 20S proteasome via an interaction with its C-terminus, thereby allowing substrate entry and access to the site of proteolysis. Thus, the C-termini of the proteasomal ATPase may function like a 'key in a lock' to induce gate opening and therefore regulate proteolysis. The protein is Proteasome-associated ATPase of Streptosporangium roseum (strain ATCC 12428 / DSM 43021 / JCM 3005 / KCTC 9067 / NCIMB 10171 / NRRL 2505 / NI 9100).